Reading from the N-terminus, the 446-residue chain is Adenylosuccinate synthetase (446 aa).

Residues 20–26 and 48–50 contribute to the GTP site; these read GDEGKGK and GHT. The active-site Proton acceptor is the D21. Mg(2+)-binding residues include D21 and G48. Residues 21 to 24, 46 to 49, T137, R151, Q232, T247, and R319 contribute to the IMP site; these read DEGK and NAGH. The Proton donor role is filled by H49. 315 to 321 serves as a coordination point for substrate; it reads SVTGRPR. GTP-binding positions include R321, 347–349, and 429–431; these read KLD and STG.

Belongs to the adenylosuccinate synthetase family. Homodimer. Requires Mg(2+) as cofactor.

The protein localises to the cytoplasm. It carries out the reaction IMP + L-aspartate + GTP = N(6)-(1,2-dicarboxyethyl)-AMP + GDP + phosphate + 2 H(+). It participates in purine metabolism; AMP biosynthesis via de novo pathway; AMP from IMP: step 1/2. Its function is as follows. Plays an important role in the de novo pathway of purine nucleotide biosynthesis. Catalyzes the first committed step in the biosynthesis of AMP from IMP. The protein is Adenylosuccinate synthetase of Polynucleobacter necessarius subsp. necessarius (strain STIR1).